Here is a 365-residue protein sequence, read N- to C-terminus: Chorismate synthase (365 aa).

The NADP(+) site is built by Arg-48 and Arg-54. Residues 125 to 127 (RSS), 238 to 239 (NA), Gly-278, 293 to 297 (KPTSS), and Arg-319 contribute to the FMN site.

It belongs to the chorismate synthase family. As to quaternary structure, homotetramer. The cofactor is FMNH2.

It carries out the reaction 5-O-(1-carboxyvinyl)-3-phosphoshikimate = chorismate + phosphate. It functions in the pathway metabolic intermediate biosynthesis; chorismate biosynthesis; chorismate from D-erythrose 4-phosphate and phosphoenolpyruvate: step 7/7. Its function is as follows. Catalyzes the anti-1,4-elimination of the C-3 phosphate and the C-6 proR hydrogen from 5-enolpyruvylshikimate-3-phosphate (EPSP) to yield chorismate, which is the branch point compound that serves as the starting substrate for the three terminal pathways of aromatic amino acid biosynthesis. This reaction introduces a second double bond into the aromatic ring system. In Vesicomyosocius okutanii subsp. Calyptogena okutanii (strain HA), this protein is Chorismate synthase.